Consider the following 325-residue polypeptide: Probable exonuclease subunit 1 (325 aa).

In terms of assembly, could consist of two subunits: D13 and D12.

In terms of biological role, possible exonuclease involved in phage DNA recombination, replication, and repair. The protein is Probable exonuclease subunit 1 (D12) of Escherichia coli (Enterobacteria phage T5).